Here is a 194-residue protein sequence, read N- to C-terminus: Cilia- and flagella-associated protein 107 (194 aa).

Mn regions lie at residues 45–60 (TPQSIYRKEYIPFPDH) and 95–107 (ISTYDDHYNRHGY).

As to quaternary structure, microtubule inner protein component of sperm flagellar doublet microtubules. In terms of tissue distribution, expressed in airway epithelial cells.

It is found in the cytoplasm. The protein resides in the cytoskeleton. The protein localises to the cilium axoneme. It localises to the flagellum axoneme. Microtubule inner protein (MIP) part of the dynein-decorated doublet microtubules (DMTs) in cilia axoneme, which is required for motile cilia beating. This chain is Cilia- and flagella-associated protein 107, found in Homo sapiens (Human).